The following is a 964-amino-acid chain: Integrator complex subunit 7 (964 aa).

Residues 937–958 (QQLRHQLQQQQQNVPQPAAQRN) are compositionally biased toward low complexity. The interval 937-964 (QQLRHQLQQQQQNVPQPAAQRNISTRFQ) is disordered.

It belongs to the Integrator subunit 7 family. In terms of assembly, component of the Integrator complex, composed of core subunits INTS1, INTS2, INTS3, INTS4, INTS5, INTS6, INTS7, INTS8, INTS9/RC74, INTS10, INTS11/CPSF3L, INTS12, INTS13, INTS14 and INTS15. The core complex associates with protein phosphatase 2A subunits PPP2CA and PPP2R1A, to form the Integrator-PP2A (INTAC) complex.

Its subcellular location is the nucleus. The protein localises to the chromosome. It is found in the cytoplasm. Its function is as follows. Component of the integrator complex, a multiprotein complex that terminates RNA polymerase II (Pol II) transcription in the promoter-proximal region of genes. The integrator complex provides a quality checkpoint during transcription elongation by driving premature transcription termination of transcripts that are unfavorably configured for transcriptional elongation: the complex terminates transcription by (1) catalyzing dephosphorylation of the C-terminal domain (CTD) of Pol II subunit POLR2A/RPB1 and SUPT5H/SPT5, (2) degrading the exiting nascent RNA transcript via endonuclease activity and (3) promoting the release of Pol II from bound DNA. The integrator complex is also involved in terminating the synthesis of non-coding Pol II transcripts, such as enhancer RNAs (eRNAs), small nuclear RNAs (snRNAs), telomerase RNAs and long non-coding RNAs (lncRNAs). Essential during embryogenesis for eye development. The protein is Integrator complex subunit 7 (ints7) of Danio rerio (Zebrafish).